We begin with the raw amino-acid sequence, 115 residues long: SOSS complex subunit C homolog (115 aa).

Belongs to the SOSS-C family.

In Drosophila grimshawi (Hawaiian fruit fly), this protein is SOSS complex subunit C homolog.